The primary structure comprises 195 residues: Thymidylate kinase (195 aa).

7–14 (GIDGVGKS) provides a ligand contact to ATP.

It belongs to the thymidylate kinase family.

It catalyses the reaction dTMP + ATP = dTDP + ADP. In terms of biological role, phosphorylation of dTMP to form dTDP in both de novo and salvage pathways of dTTP synthesis. The sequence is that of Thymidylate kinase from Campylobacter concisus (strain 13826).